The chain runs to 277 residues: Putative phosphoenolpyruvate synthase regulatory protein (277 aa).

Residue 157 to 164 (GVSRSGKT) coordinates ADP.

This sequence belongs to the pyruvate, phosphate/water dikinase regulatory protein family. PSRP subfamily.

The enzyme catalyses [pyruvate, water dikinase] + ADP = [pyruvate, water dikinase]-phosphate + AMP + H(+). The catalysed reaction is [pyruvate, water dikinase]-phosphate + phosphate + H(+) = [pyruvate, water dikinase] + diphosphate. Bifunctional serine/threonine kinase and phosphorylase involved in the regulation of the phosphoenolpyruvate synthase (PEPS) by catalyzing its phosphorylation/dephosphorylation. This Vibrio cholerae serotype O1 (strain ATCC 39541 / Classical Ogawa 395 / O395) protein is Putative phosphoenolpyruvate synthase regulatory protein.